The primary structure comprises 132 residues: D-ribose pyranase (132 aa).

H20 serves as the catalytic Proton donor. Substrate is bound by residues D28, H99, and 121 to 123; that span reads YAN.

This sequence belongs to the RbsD / FucU family. RbsD subfamily. Homodecamer.

The protein resides in the cytoplasm. The catalysed reaction is beta-D-ribopyranose = beta-D-ribofuranose. It participates in carbohydrate metabolism; D-ribose degradation; D-ribose 5-phosphate from beta-D-ribopyranose: step 1/2. Functionally, catalyzes the interconversion of beta-pyran and beta-furan forms of D-ribose. The polypeptide is D-ribose pyranase (Chromobacterium violaceum (strain ATCC 12472 / DSM 30191 / JCM 1249 / CCUG 213 / NBRC 12614 / NCIMB 9131 / NCTC 9757 / MK)).